The chain runs to 396 residues: MIQTKDIIELTDTYGANNYHPLPIVISKAEGVWVEDPEGNRYMDLLSAYSAVNQGHRHPKIINALIDQANRVTLTSRAFHSDQLGPWYEKVAKLTNKEMVLPMNTGAEAVETAIKTARRWAYDVKKVEANRAEIIVCEDNFHGRTMGAVSMSSNEEYKRGFGPMLPGIIVIPYGDLEALKAAITPNTAAFILEPIQGEAGINIPPAGFLKEALEVCKKENVLFVADEIQTGLGRTGKVFACDWDNVTPDMYILGKALGGGVFPISCVAANRDILGVFEPGSHGSTFGGNPLACAVSIAALEVLEEEKLTERSLQLGEKLVGQLKEIDNPMITEVRGKGLFIGIELNEPARPYCEQLKAAGLLCKETHENVIRIAPPLVISEEDLEWAFQKIKAVLS.

K255 bears the N6-(pyridoxal phosphate)lysine mark.

This sequence belongs to the class-III pyridoxal-phosphate-dependent aminotransferase family. OAT subfamily. The cofactor is pyridoxal 5'-phosphate.

The protein resides in the cytoplasm. The catalysed reaction is a 2-oxocarboxylate + L-ornithine = L-glutamate 5-semialdehyde + an L-alpha-amino acid. It functions in the pathway amino-acid biosynthesis; L-proline biosynthesis; L-glutamate 5-semialdehyde from L-ornithine: step 1/1. Catalyzes the interconversion of ornithine to glutamate semialdehyde. This chain is Ornithine aminotransferase, found in Bacillus cereus (strain 03BB102).